A 430-amino-acid polypeptide reads, in one-letter code: Adenylosuccinate synthetase (430 aa).

Residues 12–18 (GDEGKGK) and 40–42 (GHT) contribute to the GTP site. Residue D13 is the Proton acceptor of the active site. Mg(2+)-binding residues include D13 and G40. IMP-binding positions include 13–16 (DEGK), 38–41 (NAGH), T128, R142, Q223, T238, and R302. H41 acts as the Proton donor in catalysis. A substrate-binding site is contributed by 298–304 (TTTGRPR). GTP contacts are provided by residues R304, 330–332 (SID), and 412–414 (SVG).

Belongs to the adenylosuccinate synthetase family. As to quaternary structure, homodimer. The cofactor is Mg(2+).

Its subcellular location is the cytoplasm. The enzyme catalyses IMP + L-aspartate + GTP = N(6)-(1,2-dicarboxyethyl)-AMP + GDP + phosphate + 2 H(+). It functions in the pathway purine metabolism; AMP biosynthesis via de novo pathway; AMP from IMP: step 1/2. Functionally, plays an important role in the de novo pathway of purine nucleotide biosynthesis. Catalyzes the first committed step in the biosynthesis of AMP from IMP. The polypeptide is Adenylosuccinate synthetase (Streptococcus gordonii (strain Challis / ATCC 35105 / BCRC 15272 / CH1 / DL1 / V288)).